The chain runs to 116 residues: MEEKNTVSLSKHIERPVEVVESHSTYILSAQGLYLTERVLRSYFKQPDLIITWKDSMRAYLTFSSPQEAQKAYLDSLRWGSQLNAIIKPFYGSHDEVLRLCKRKRIIPLQNFLTSG.

This is an uncharacterized protein from Schizosaccharomyces pombe (strain 972 / ATCC 24843) (Fission yeast).